The primary structure comprises 601 residues: Probable HECT-type ubiquitin ligase-interacting protein creD (601 aa).

Disordered regions lie at residues glutamate 374–serine 397 and serine 455–histidine 489. A compositionally biased stretch (low complexity) spans proline 461–proline 473. Residues leucine 475–histidine 489 show a composition bias toward basic and acidic residues.

The protein belongs to the arrestin family. As to quaternary structure, interacts with hulA.

Its function is as follows. Component of the regulatory network controlling carbon source utilization through ubiquitination and deubiquitination involving creA, creB, creC, creD and acrB. May be involved in signaling by recognizing appropriately phosphorylated substrates via its arrestin domains and then recruit a HECT-type ubiquitin ligase such as hulA, leading to ubiquitination of the substrate, providing a link between ubiquitination and phosphorylation in protein regulation and stability. The polypeptide is Probable HECT-type ubiquitin ligase-interacting protein creD (creD) (Neosartorya fischeri (strain ATCC 1020 / DSM 3700 / CBS 544.65 / FGSC A1164 / JCM 1740 / NRRL 181 / WB 181) (Aspergillus fischerianus)).